We begin with the raw amino-acid sequence, 502 residues long: Maturase K (502 aa).

The protein belongs to the intron maturase 2 family. MatK subfamily.

It localises to the plastid. The protein localises to the chloroplast. In terms of biological role, usually encoded in the trnK tRNA gene intron. Probably assists in splicing its own and other chloroplast group II introns. In Theobroma cacao (Cacao), this protein is Maturase K.